Reading from the N-terminus, the 244-residue chain is Acetoacetate decarboxylase (244 aa).

The active-site Schiff-base intermediate with acetoacetate is the Lys-115.

This sequence belongs to the ADC family.

The enzyme catalyses acetoacetate + H(+) = acetone + CO2. Catalyzes the conversion of acetoacetate to acetone and carbon dioxide. The polypeptide is Acetoacetate decarboxylase (Streptomyces nogalater).